The sequence spans 427 residues: Ribitol transporter (427 aa).

Residues 1–7 (MSVNNKQ) lie on the Cytoplasmic side of the membrane. The helical transmembrane segment at 8–28 (WYGLPLNLIWGYVAIAVFMTG) threads the bilayer. Topologically, residues 29–51 (DGFELAFLSHYIKALGFTPAQAS) are extracellular. A helical membrane pass occupies residues 52–72 (FAFTLYGLAAALSAWVSGVVA). The Cytoplasmic segment spans residues 73–79 (EIITPRK). The helical transmembrane segment at 80–100 (AMLIGFVLWCVFHVLFLVFGL) threads the bilayer. The Extracellular segment spans residues 101–107 (GRANYAL). Residues 108 to 128 (ILLFYGIRGLAYPLFLYSFIV) traverse the membrane as a helical segment. At 129 to 141 (AIIHNVRSDSSSS) the chain is on the cytoplasmic side. Residues 142–162 (ALGWFWAVYSVGIGVFGSYIP) traverse the membrane as a helical segment. The Extracellular portion of the chain corresponds to 163 to 171 (SFTIPHIGE). Residues 172 to 192 (MGTLWLALLFCATGGIIALVS) traverse the membrane as a helical segment. Residues 193–238 (MRHTETPRHMQNLTTREKFAELGRAATLLYTNRSILFSSIVRIINT) are Cytoplasmic-facing. The chain crosses the membrane as a helical span at residues 239–259 (LSLFGFAVIMPMMFVDELGFT). Residues 260–263 (TSEW) lie on the Extracellular side of the membrane. Residues 264–284 (LQVWAAFFFTTIFSNVFWGIV) traverse the membrane as a helical segment. Residues 285-295 (AEKMGWMKVIR) are Cytoplasmic-facing. The helical transmembrane segment at 296-316 (WFGCIGMALSSLAFYYLPQHF) threads the bilayer. At 317–323 (GHNFAMA) the chain is on the extracellular side. A helical transmembrane segment spans residues 324-344 (LVPAIALGIFVAAFVPMAAVF). The Cytoplasmic portion of the chain corresponds to 345-360 (PALEPNHKGAAISVYN). A helical transmembrane segment spans residues 361–381 (LSAGLSNFLAPAIAVVLLPYF). The Extracellular portion of the chain corresponds to 382 to 383 (ST). The chain crosses the membrane as a helical span at residues 384 to 404 (IGVVIAYTALYILAFFLCPLI). At 405–427 (RVEQPGFTSDQHAKPFTANAAES) the chain is on the cytoplasmic side.

The protein belongs to the major facilitator superfamily. Sugar transporter (TC 2.A.1.1) family. CsbX subfamily.

The protein resides in the cell membrane. The polypeptide is Ribitol transporter (rbtT) (Klebsiella pneumoniae).